Here is a 295-residue protein sequence, read N- to C-terminus: Phosphatidylserine decarboxylase proenzyme (295 aa).

Catalysis depends on charge relay system; for autoendoproteolytic cleavage activity residues Asp113, His169, and Ser256. Ser256 acts as the Schiff-base intermediate with substrate; via pyruvic acid; for decarboxylase activity in catalysis. Ser256 is modified (pyruvic acid (Ser); by autocatalysis).

It belongs to the phosphatidylserine decarboxylase family. PSD-B subfamily. Prokaryotic type II sub-subfamily. In terms of assembly, heterodimer of a large membrane-associated beta subunit and a small pyruvoyl-containing alpha subunit. Pyruvate serves as cofactor. Is synthesized initially as an inactive proenzyme. Formation of the active enzyme involves a self-maturation process in which the active site pyruvoyl group is generated from an internal serine residue via an autocatalytic post-translational modification. Two non-identical subunits are generated from the proenzyme in this reaction, and the pyruvate is formed at the N-terminus of the alpha chain, which is derived from the carboxyl end of the proenzyme. The autoendoproteolytic cleavage occurs by a canonical serine protease mechanism, in which the side chain hydroxyl group of the serine supplies its oxygen atom to form the C-terminus of the beta chain, while the remainder of the serine residue undergoes an oxidative deamination to produce ammonia and the pyruvoyl prosthetic group on the alpha chain. During this reaction, the Ser that is part of the protease active site of the proenzyme becomes the pyruvoyl prosthetic group, which constitutes an essential element of the active site of the mature decarboxylase.

It localises to the cell membrane. It carries out the reaction a 1,2-diacyl-sn-glycero-3-phospho-L-serine + H(+) = a 1,2-diacyl-sn-glycero-3-phosphoethanolamine + CO2. Its pathway is phospholipid metabolism; phosphatidylethanolamine biosynthesis; phosphatidylethanolamine from CDP-diacylglycerol: step 2/2. In terms of biological role, catalyzes the formation of phosphatidylethanolamine (PtdEtn) from phosphatidylserine (PtdSer). This is Phosphatidylserine decarboxylase proenzyme from Clostridium botulinum (strain Kyoto / Type A2).